The following is an 86-amino-acid chain: Immunity protein CdiI-1 (86 aa).

In terms of assembly, interacts with the C-terminal fragment (CT) of cognate toxin protein CdiA-EC869.

Immunity protein component of a toxin-immunity protein module, which functions as a cellular contact-dependent growth inhibition (CDI) system. CDI modules allow bacteria to communicate with and inhibit the growth of closely related neighboring bacteria in a contact-dependent fashion. Neutralizes the toxic activity of cognate toxin CdiA-EC869 (the C-terminal 289 residue CT fragment). Does not inhibit toxic activity of CdiA from other toxin-immunity modules or strains of E.coli. The chain is Immunity protein CdiI-1 from Escherichia coli O157:H7 (strain EC869).